The primary structure comprises 131 residues: uncharacterized protein (131 aa).

The tract at residues 112–131 (LTDNPGAVRKSQKSLIPPYN) is disordered.

This is an uncharacterized protein from Fowl adenovirus A serotype 1 (strain CELO / Phelps) (FAdV-1).